The chain runs to 272 residues: Indole-3-glycerol phosphate synthase (272 aa).

It belongs to the TrpC family.

The catalysed reaction is 1-(2-carboxyphenylamino)-1-deoxy-D-ribulose 5-phosphate + H(+) = (1S,2R)-1-C-(indol-3-yl)glycerol 3-phosphate + CO2 + H2O. Its pathway is amino-acid biosynthesis; L-tryptophan biosynthesis; L-tryptophan from chorismate: step 4/5. In Mycolicibacterium vanbaalenii (strain DSM 7251 / JCM 13017 / BCRC 16820 / KCTC 9966 / NRRL B-24157 / PYR-1) (Mycobacterium vanbaalenii), this protein is Indole-3-glycerol phosphate synthase.